Here is a 285-residue protein sequence, read N- to C-terminus: Acetyl-coenzyme A carboxylase carboxyl transferase subunit beta (285 aa).

The region spanning 29-285 (IMTKCPKCKK…ILKIHQEVTK (257 aa)) is the CoA carboxyltransferase N-terminal domain. Zn(2+)-binding residues include cysteine 33, cysteine 36, cysteine 52, and cysteine 55. The C4-type zinc-finger motif lies at 33-55 (CPKCKKIMYTKELAENLNVCFNC).

Belongs to the AccD/PCCB family. In terms of assembly, acetyl-CoA carboxylase is a heterohexamer composed of biotin carboxyl carrier protein (AccB), biotin carboxylase (AccC) and two subunits each of ACCase subunit alpha (AccA) and ACCase subunit beta (AccD). Requires Zn(2+) as cofactor.

It localises to the cytoplasm. It carries out the reaction N(6)-carboxybiotinyl-L-lysyl-[protein] + acetyl-CoA = N(6)-biotinyl-L-lysyl-[protein] + malonyl-CoA. It participates in lipid metabolism; malonyl-CoA biosynthesis; malonyl-CoA from acetyl-CoA: step 1/1. In terms of biological role, component of the acetyl coenzyme A carboxylase (ACC) complex. Biotin carboxylase (BC) catalyzes the carboxylation of biotin on its carrier protein (BCCP) and then the CO(2) group is transferred by the transcarboxylase to acetyl-CoA to form malonyl-CoA. This is Acetyl-coenzyme A carboxylase carboxyl transferase subunit beta from Staphylococcus aureus (strain Mu3 / ATCC 700698).